We begin with the raw amino-acid sequence, 149 residues long: UPF0179 protein rrnAC1064 (149 aa).

The protein belongs to the UPF0179 family.

This Haloarcula marismortui (strain ATCC 43049 / DSM 3752 / JCM 8966 / VKM B-1809) (Halobacterium marismortui) protein is UPF0179 protein rrnAC1064.